Here is a 411-residue protein sequence, read N- to C-terminus: Tyrosine--tRNA ligase (411 aa).

Y34 serves as a coordination point for L-tyrosine. A 'HIGH' region motif is present at residues 39–48; the sequence is CTATSLHIGS. Residues Y171 and Q175 each contribute to the L-tyrosine site. The 'KMSKS' region signature appears at 231-235; it reads KMGKT. K234 serves as a coordination point for ATP. The S4 RNA-binding domain maps to 345–411; sequence ISAYELFHEA…GKKRHILVRV (67 aa).

It belongs to the class-I aminoacyl-tRNA synthetase family. TyrS type 1 subfamily. As to quaternary structure, homodimer.

The protein resides in the cytoplasm. The catalysed reaction is tRNA(Tyr) + L-tyrosine + ATP = L-tyrosyl-tRNA(Tyr) + AMP + diphosphate + H(+). Functionally, catalyzes the attachment of tyrosine to tRNA(Tyr) in a two-step reaction: tyrosine is first activated by ATP to form Tyr-AMP and then transferred to the acceptor end of tRNA(Tyr). The chain is Tyrosine--tRNA ligase from Rickettsia felis (strain ATCC VR-1525 / URRWXCal2) (Rickettsia azadi).